A 307-amino-acid polypeptide reads, in one-letter code: Ribosomal RNA small subunit methyltransferase H (307 aa).

Residues 32–34 (AGH), D51, I82, D99, and Q106 each bind S-adenosyl-L-methionine.

This sequence belongs to the methyltransferase superfamily. RsmH family.

The protein localises to the cytoplasm. It catalyses the reaction cytidine(1402) in 16S rRNA + S-adenosyl-L-methionine = N(4)-methylcytidine(1402) in 16S rRNA + S-adenosyl-L-homocysteine + H(+). In terms of biological role, specifically methylates the N4 position of cytidine in position 1402 (C1402) of 16S rRNA. In Campylobacter concisus (strain 13826), this protein is Ribosomal RNA small subunit methyltransferase H.